A 921-amino-acid polypeptide reads, in one-letter code: MEYKNTLLMPKTEFPMRGNLPKREPAMQEKWAEMNIYEKVQEHTKGRPLFVLHDGPPYANGDIHMGHALNKVLKDFIVRYKSMTGFCAPYVPGWDTHGLPIEQALTNKGVKRKEMTVAEFRKLCAEYAYEQVERQREQFKRLGVRADWDNPYITLEPAYEAQQIKVFGDMAKKGYIYKGQKPVYWSPTSESALAEAEIEYQDKKSASIYVAFPVKDGKNVLEGDEKYIIWTTTPWTLPANLGISVHPELEYAIVKVNGEKYIIASELFETVAKTLEWENAEVVKTVKGSELEYTVAKHPFYDRDSLVMLGDHVTTDAGTGCVHTAPGHGEDDFIVGKKYGLEVLCPVDDKGVLTEEAPGFEGLFYDKANKPITEKLEEVGALLKLTFITHSYPHDWRTKKPIIFRATAQWFASIEAFRKELLEAVAETKWVPAWGETRLHNMVRDRGDWCISRQRAWGVPIPVFYAENGDPIITDETINHVADLFREHGSNVWFEREAKDLLPEGFTHSGSPNGEFRKETDIMDVWFDSGSSHQAVLEERDDLQRPADLYLEGSDQYRGWFNSSLSTAVAVTGKAPYKGVLSHGFVLDGEGRKMSKSIGNIVVPKKIMDQLGGDILRLWVSSVDYQSDVRISDDILKQVAEVYRKIRNTFRFLLGNLDDFKPSENTVAVAELREVDRYMLVKLNDLITKVKEAYETYDFAAVYHAIHNFCTIDLSSFYLDFAKDILYIEGANHEDRRAIQTVLYDVLVALTKLVTPILPHTADEVWPYIPGVTEESVQLTDMPEAVQLDGAEALKTKWDAFMTLRDDVLKALEVARNEKVIGKSLNASITLYPTAEMKAMLESINEDLKQLFIVSEYKLGGMMEEAPADAPKYEHTAVVVVQATGETCERCWVVSETIGKDAEHETLCERCATVVKENYVK.

The 'HIGH' region motif lies at 57-67 (PYANGDIHMGH). Glu552 is a binding site for L-isoleucyl-5'-AMP. The 'KMSKS' region signature appears at 593–597 (KMSKS). Lys596 lines the ATP pocket. Zn(2+) contacts are provided by Cys888, Cys891, Cys908, and Cys911.

Belongs to the class-I aminoacyl-tRNA synthetase family. IleS type 1 subfamily. In terms of assembly, monomer. The cofactor is Zn(2+).

The protein localises to the cytoplasm. The enzyme catalyses tRNA(Ile) + L-isoleucine + ATP = L-isoleucyl-tRNA(Ile) + AMP + diphosphate. In terms of biological role, catalyzes the attachment of isoleucine to tRNA(Ile). As IleRS can inadvertently accommodate and process structurally similar amino acids such as valine, to avoid such errors it has two additional distinct tRNA(Ile)-dependent editing activities. One activity is designated as 'pretransfer' editing and involves the hydrolysis of activated Val-AMP. The other activity is designated 'posttransfer' editing and involves deacylation of mischarged Val-tRNA(Ile). The sequence is that of Isoleucine--tRNA ligase from Bacillus cereus (strain AH187).